A 168-amino-acid chain; its full sequence is Peptidoglycan-associated lipoprotein (168 aa).

Residues 1 to 24 (MRRIQSIARSPIAIALFMSLAVAG) form the signal peptide. Cys25 is lipidated: N-palmitoyl cysteine. Cys25 carries the S-diacylglycerol cysteine lipid modification. One can recognise an OmpA-like domain in the interval 51-167 (QDFTVNVGDR…RAVTVLNGAG (117 aa)).

This sequence belongs to the Pal lipoprotein family. As to quaternary structure, the Tol-Pal system is composed of five core proteins: the inner membrane proteins TolA, TolQ and TolR, the periplasmic protein TolB and the outer membrane protein Pal. They form a network linking the inner and outer membranes and the peptidoglycan layer. The N-terminus is blocked.

The protein resides in the cell outer membrane. Its function is as follows. Part of the Tol-Pal system, which plays a role in outer membrane invagination during cell division and is important for maintaining outer membrane integrity. In Brucella abortus biovar 1 (strain 9-941), this protein is Peptidoglycan-associated lipoprotein.